The chain runs to 102 residues: Large ribosomal subunit protein bL21 (102 aa).

This sequence belongs to the bacterial ribosomal protein bL21 family. In terms of assembly, part of the 50S ribosomal subunit. Contacts protein L20.

In terms of biological role, this protein binds to 23S rRNA in the presence of protein L20. This chain is Large ribosomal subunit protein bL21, found in Sorangium cellulosum (strain So ce56) (Polyangium cellulosum (strain So ce56)).